A 390-amino-acid chain; its full sequence is Transforming growth factor beta-1 proprotein (390 aa).

The N-terminal stretch at 1 to 29 (MPPSGLRLLPLLLPLLWLLVLTPGRPAAG) is a signal peptide. Residues 30 to 74 (LSTCKTIDMELVKRKRIEAIRGQILSKLRLASPPSQGEVPPGPLP) are straightjacket domain. An arm domain region spans residues 75–271 (EAVLALYNST…ATPLERAQHL (197 aa)). N-linked (GlcNAc...) asparagine glycans are attached at residues Asn82, Asn136, and Asn176. The segment at 226–252 (DSRDNTLQVDINGFTTGRRGDLATIHG) is bowtie tail. The short motif at 244–246 (RGD) is the Cell attachment site element. 4 cysteine pairs are disulfide-bonded: Cys285–Cys294, Cys293–Cys356, Cys322–Cys387, and Cys326–Cys389.

Belongs to the TGF-beta family. As to quaternary structure, homodimer; disulfide-linked. Interacts with the serine proteases, HTRA1 and HTRA3: the interaction with either inhibits TGFB1-mediated signaling and the HTRA protease activity is required for this inhibition. May interact with THSD4; this interaction may lead to sequestration by FBN1 microfibril assembly and attenuation of TGFB signaling. Interacts with CD109, DPT and ASPN. Interacts with EFEMP2. Interacts with TSKU; the interaction contributes to regulation of the hair cycle. In terms of assembly, homodimer; disulfide-linked. Interacts with transforming growth factor beta-1 (TGF-beta-1) chain; interaction is non-covalent and maintains TGF-beta-1 in a latent state; each latency-associated peptide (LAP) monomer interacts with TGF-beta-1 in the other monomer. Interacts with LTBP1; leading to regulation of TGF-beta-1 activation. Interacts with LRRC32/GARP; leading to regulation of TGF-beta-1 activation on the surface of activated regulatory T-cells (Tregs). Interacts with LRRC33/NRROS; leading to regulation of TGF-beta-1 in macrophages and microglia. Interacts (via cell attachment site) with integrins ITGAV and ITGB6 (ITGAV:ITGB6), leading to release of the active TGF-beta-1. Interacts with NREP; the interaction results in a decrease in TGFB1 autoinduction. Interacts with HSP90AB1; inhibits latent TGFB1 activation. Interact with PSG9; leading to TGFB1 activation. Interacts with TGFBR3. Homodimer; disulfide-linked. Interacts with TGF-beta receptors (TGFBR1 and TGFBR2), leading to signal transduction. Post-translationally, transforming growth factor beta-1 proprotein: The precursor proprotein is cleaved in the Golgi apparatus by FURIN to form Transforming growth factor beta-1 (TGF-beta-1) and Latency-associated peptide (LAP) chains, which remain non-covalently linked, rendering TGF-beta-1 inactive. In terms of processing, N-glycosylated. Deglycosylation leads to activation of Transforming growth factor beta-1 (TGF-beta-1); mechanisms triggering deglycosylation-driven activation of TGF-beta-1 are however unclear. In terms of tissue distribution, highly expressed in bone. Abundantly expressed in articular cartilage and chondrocytes and is increased in osteoarthritis (OA). Colocalizes with ASPN in chondrocytes within OA lesions of articular cartilage.

It localises to the secreted. The protein localises to the extracellular space. It is found in the extracellular matrix. Transforming growth factor beta-1 proprotein: Precursor of the Latency-associated peptide (LAP) and Transforming growth factor beta-1 (TGF-beta-1) chains, which constitute the regulatory and active subunit of TGF-beta-1, respectively. Functionally, required to maintain the Transforming growth factor beta-1 (TGF-beta-1) chain in a latent state during storage in extracellular matrix. Associates non-covalently with TGF-beta-1 and regulates its activation via interaction with 'milieu molecules', such as LTBP1, LRRC32/GARP and LRRC33/NRROS, that control activation of TGF-beta-1. Interaction with LRRC33/NRROS regulates activation of TGF-beta-1 in macrophages and microglia. Interaction with LRRC32/GARP controls activation of TGF-beta-1 on the surface of activated regulatory T-cells (Tregs). Interaction with integrins (ITGAV:ITGB6 or ITGAV:ITGB8) results in distortion of the Latency-associated peptide chain and subsequent release of the active TGF-beta-1. Its function is as follows. Multifunctional protein that regulates the growth and differentiation of various cell types and is involved in various processes, such as normal development, immune function, microglia function and responses to neurodegeneration. Activation into mature form follows different steps: following cleavage of the proprotein in the Golgi apparatus, Latency-associated peptide (LAP) and Transforming growth factor beta-1 (TGF-beta-1) chains remain non-covalently linked rendering TGF-beta-1 inactive during storage in extracellular matrix. At the same time, LAP chain interacts with 'milieu molecules', such as LTBP1, LRRC32/GARP and LRRC33/NRROS that control activation of TGF-beta-1 and maintain it in a latent state during storage in extracellular milieus. TGF-beta-1 is released from LAP by integrins (ITGAV:ITGB6 or ITGAV:ITGB8): integrin-binding to LAP stabilizes an alternative conformation of the LAP bowtie tail and results in distortion of the LAP chain and subsequent release of the active TGF-beta-1. Once activated following release of LAP, TGF-beta-1 acts by binding to TGF-beta receptors (TGFBR1 and TGFBR2), which transduce signal. While expressed by many cells types, TGF-beta-1 only has a very localized range of action within cell environment thanks to fine regulation of its activation by Latency-associated peptide chain (LAP) and 'milieu molecules'. Plays an important role in bone remodeling: acts as a potent stimulator of osteoblastic bone formation, causing chemotaxis, proliferation and differentiation in committed osteoblasts. Can promote either T-helper 17 cells (Th17) or regulatory T-cells (Treg) lineage differentiation in a concentration-dependent manner. At high concentrations, leads to FOXP3-mediated suppression of RORC and down-regulation of IL-17 expression, favoring Treg cell development. At low concentrations in concert with IL-6 and IL-21, leads to expression of the IL-17 and IL-23 receptors, favoring differentiation to Th17 cells. Stimulates sustained production of collagen through the activation of CREB3L1 by regulated intramembrane proteolysis (RIP). Mediates SMAD2/3 activation by inducing its phosphorylation and subsequent translocation to the nucleus. Positively regulates odontoblastic differentiation in dental papilla cells, via promotion of IPO7-mediated translocation of phosphorylated SMAD2 to the nucleus and subsequent transcription of target genes. Can induce epithelial-to-mesenchymal transition (EMT) and cell migration in various cell types. This is Transforming growth factor beta-1 proprotein from Homo sapiens (Human).